The primary structure comprises 669 residues: Trifunctional UDP-glucose 4,6-dehydratase/UDP-4-keto-6-deoxy-D-glucose 3,5-epimerase/UDP-4-keto-L-rhamnose-reductase RHM1 (669 aa).

13–19 (GAAGFIA) contacts NAD(+). Thr132 contributes to the substrate binding site. The Proton donor role is filled by Asp133. Residues Glu134 and Tyr159 each act as proton acceptor in the active site. 391–397 (GKTGWIG) lines the NADP(+) pocket.

In the N-terminal section; belongs to the NAD(P)-dependent epimerase/dehydratase family. dTDP-glucose dehydratase subfamily. This sequence in the C-terminal section; belongs to the dTDP-4-dehydrorhamnose reductase family. The cofactor is NAD(+). NADP(+) is required as a cofactor. In terms of tissue distribution, expressed in roots, stems, leaves, seedlings, inflorescence tips, and siliques. Detected in the adaxial side of cotyledons, in the emerging leaves and in trichomes. Also detected in the root tip, more precisely in the epidermal cells in the meristematic and elongation zone.

It is found in the cytoplasm. The protein localises to the cytosol. The catalysed reaction is UDP-alpha-D-glucose = UDP-4-dehydro-6-deoxy-alpha-D-glucose + H2O. It participates in carbohydrate biosynthesis. Functionally, trifunctional enzyme involved in UDP-beta-L-rhamnose biosynthesis, a precursor of the primary cell wall components rhamnogalacturonan I (RG-I) and rhamnogalacturonan II (RG-II). Plays a major role in supplying UDP-rhamnose for flavonol biosynthesis. Catalyzes the dehydration of UDP-glucose to form UDP-4-dehydro-6-deoxy-D-glucose followed by the epimerization of the C3' and C5' positions of UDP-4-dehydro-6-deoxy-D-glucose to form UDP-4-keto-beta-L-rhamnose and the reduction of UDP-4-keto-beta-L-rhamnose to yield UDP-beta-L-rhamnose. This chain is Trifunctional UDP-glucose 4,6-dehydratase/UDP-4-keto-6-deoxy-D-glucose 3,5-epimerase/UDP-4-keto-L-rhamnose-reductase RHM1, found in Arabidopsis thaliana (Mouse-ear cress).